A 121-amino-acid chain; its full sequence is Small ribosomal subunit protein uS11c (121 aa).

This sequence belongs to the universal ribosomal protein uS11 family. As to quaternary structure, part of the 30S ribosomal subunit.

Its subcellular location is the plastid. The protein resides in the chloroplast. The sequence is that of Small ribosomal subunit protein uS11c from Cyanidioschyzon merolae (strain NIES-3377 / 10D) (Unicellular red alga).